Here is a 1011-residue protein sequence, read N- to C-terminus: Beta-galactosidase A (1011 aa).

Positions 1–19 (MKLLSSWVVAALAAQAAGA) are cleaved as a signal peptide. Substrate contacts are provided by residues Y96, 140 to 142 (NAE), and N199. E200 functions as the Proton donor in the catalytic mechanism. Intrachain disulfides connect C205–C206 and C267–C316. E299 (nucleophile) is an active-site residue. Y365 contacts substrate. Residues N374, N456, N625, N707, N763, N780, and N917 are each glycosylated (N-linked (GlcNAc...) asparagine).

This sequence belongs to the glycosyl hydrolase 35 family. As to quaternary structure, monomer.

It is found in the secreted. It carries out the reaction Hydrolysis of terminal non-reducing beta-D-galactose residues in beta-D-galactosides.. Cleaves beta-linked terminal galactosyl residues from gangliosides, glycoproteins, and glycosaminoglycans. Has high in vitro transglycosylation activity with p-nitrophenyl-beta-D-galactopyranoside, methyl-beta-D-galactopyranoside or lactose as a donor and galactose as an acceptor. The sequence is that of Beta-galactosidase A (lacA) from Penicillium sp.